The following is a 1091-amino-acid chain: Neural cell adhesion molecule 1 (1091 aa).

An N-terminal signal peptide occupies residues 1 to 19 (MLPAAALPWTLFFLGAAAS). 5 consecutive Ig-like C2-type domains span residues 20-113 (LQVD…VNVK), 116-205 (QKLM…KDIQ), 212-301 (PSVR…ATIH), 308-403 (PKIT…LEVQ), and 406-495 (PKLQ…FILV). Residues 20-711 (LQVDIVPSQG…STSPTSGLGT (692 aa)) are Extracellular-facing. Disulfide bonds link Cys41-Cys96 and Cys139-Cys189. Residues 152 to 156 (KHKGR) and 161 to 165 (KKDVR) each bind heparin. N-linked (GlcNAc...) asparagine glycosylation occurs at Asn222. Residues Cys235 and Cys287 are joined by a disulfide bond. Asn315, Asn347, Asn423, Asn449, and Asn478 each carry an N-linked (GlcNAc...) asparagine glycan. A disulfide bond links Cys329 and Cys385. Cys426 and Cys479 form a disulfide bridge. Fibronectin type-III domains lie at 499-598 (TPSS…TQPV) and 600-696 (EPSA…SAQP). A helical membrane pass occupies residues 712-729 (AAIVGILIVIFVLLLVAV). Over 730 to 1091 (DVTCYFLNKC…ATEIRHLQQK (362 aa)) the chain is Cytoplasmic. 4 disordered regions span residues 756–809 (GAKG…TEPE), 840–916 (ATAQ…NNLS), 937–1023 (ETSK…GTFK), and 1041–1091 (TPAS…LQQK). Positions 758 to 799 (KGKDMEEGKAAFSKDESKEPIVEVRTEEERTPNHDGGKHTEP) are enriched in basic and acidic residues. A compositionally biased stretch (low complexity) spans 845–856 (SPTSETTTLTSS). Polar residues-rich tracts occupy residues 904–916 (DTPS…NNLS) and 980–1012 (QPST…PSQN). 2 stretches are compositionally biased toward basic and acidic residues: residues 1013–1023 (EDFKMDEGTFK) and 1068–1091 (KTEK…LQQK).

In terms of processing, polysialylated by ST8SIA2 and ST8SIA4. Polysialylation modulates cell interactions by confering both attractive and repulsive properties that are highly regulated by ST8SIA2 and ST8SIA4. Polysialylation is formed on a-2,3-linked sialic acid of core glycans.

Its subcellular location is the cell membrane. Functionally, this protein is a cell adhesion molecule involved in neuron-neuron adhesion, neurite fasciculation, outgrowth of neurites, etc. This Gallus gallus (Chicken) protein is Neural cell adhesion molecule 1.